The chain runs to 311 residues: Probable cell division protein WhiA (311 aa).

Positions 277 to 311 form a DNA-binding region, H-T-H motif; that stretch reads TLKEVADQIPDGPISKSGVNHRFKKLHEIAESLRE.

Belongs to the WhiA family.

Its function is as follows. Involved in cell division and chromosome segregation. This is Probable cell division protein WhiA from Lactobacillus acidophilus (strain ATCC 700396 / NCK56 / N2 / NCFM).